Reading from the N-terminus, the 193-residue chain is DNA damage-inducible transcript 4-like protein (193 aa).

It belongs to the DDIT4 family.

It is found in the cytoplasm. Its function is as follows. Inhibits cell growth by regulating the TOR signaling pathway upstream of the TSC1-TSC2 complex and downstream of AKT1. The chain is DNA damage-inducible transcript 4-like protein (DDIT4L) from Pongo abelii (Sumatran orangutan).